Here is a 1028-residue protein sequence, read N- to C-terminus: Contactin-3 (1028 aa).

Residues 1-19 (MMFPWKQLILLSFIGCLGG) form the signal peptide. Ig-like C2-type domains lie at 26–117 (PVFI…AKLQ), 122–208 (ENFK…ARVL), 227–313 (PKIE…GRLT), 318–402 (PHWV…AELK), 408–497 (PDFS…LVVT), and 499–593 (PTRI…ADLI). Intrachain disulfides connect Cys50/Cys100, Cys144/Cys196, Cys249/Cys297, Cys339/Cys386, and Cys431/Cys479. 2 N-linked (GlcNAc...) asparagine glycosylation sites follow: Asn65 and Asn193. Asn375, Asn468, and Asn489 each carry an N-linked (GlcNAc...) asparagine glycan. An intrachain disulfide couples Cys521 to Cys577. 4 Fibronectin type-III domains span residues 600–698 (PPEN…TEEA), 703–800 (PPSE…SAEE), 805–901 (APSQ…TKKT), and 902–998 (PPSQ…TSMD). The tract at residues 684–713 (GEPSLPSEKVRTEEAVPEVPPSEVNGGGGS) is disordered. 6 N-linked (GlcNAc...) asparagine glycosylation sites follow: Asn765, Asn860, Asn895, Asn913, Asn931, and Asn956. Ser1002 is lipidated: GPI-anchor amidated serine. Positions 1003–1028 (TSAISNVHPMSSYMPIVLFLIVYVLW) are cleaved as a propeptide — removed in mature form.

Belongs to the immunoglobulin superfamily. Contactin family. Interacts with PTPRG. In brain, it is expressed in frontal lobe, occipital lobe, cerebellum and amygdala.

The protein resides in the cell membrane. In terms of biological role, contactins mediate cell surface interactions during nervous system development. Has some neurite outgrowth-promoting activity. In Homo sapiens (Human), this protein is Contactin-3 (CNTN3).